Consider the following 196-residue polypeptide: Imidazoleglycerol-phosphate dehydratase (196 aa).

It belongs to the imidazoleglycerol-phosphate dehydratase family.

The protein resides in the cytoplasm. The catalysed reaction is D-erythro-1-(imidazol-4-yl)glycerol 3-phosphate = 3-(imidazol-4-yl)-2-oxopropyl phosphate + H2O. It participates in amino-acid biosynthesis; L-histidine biosynthesis; L-histidine from 5-phospho-alpha-D-ribose 1-diphosphate: step 6/9. The sequence is that of Imidazoleglycerol-phosphate dehydratase from Zymomonas mobilis subsp. mobilis (strain ATCC 31821 / ZM4 / CP4).